Reading from the N-terminus, the 601-residue chain is Sulfite reductase [NADPH] flavoprotein alpha-component (601 aa).

Residues 64–202 enclose the Flavodoxin-like domain; that stretch reads ITLISASQTG…AAAEWRARIV (139 aa). FMN contacts are provided by residues 70–75, 117–120, and 153–162; these read SQTGNA, STQG, and LGDTSYEFFC. One can recognise an FAD-binding FR-type domain in the interval 236 to 450; sequence EEPLVASLSV…IEHNDNFRLP (215 aa). Residues T324, A358, 388–391, 406–408, and 421–424 contribute to the FAD site; these read RLYS, TVG, and GGAS. Residues 521-522, 527-531, and D563 each bind NADP(+); these read SR and KIYVQ. Y601 provides a ligand contact to FAD.

This sequence belongs to the NADPH-dependent sulphite reductase flavoprotein subunit CysJ family. In the N-terminal section; belongs to the flavodoxin family. The protein in the C-terminal section; belongs to the flavoprotein pyridine nucleotide cytochrome reductase family. In terms of assembly, alpha(8)-beta(8). The alpha component is a flavoprotein, the beta component is a hemoprotein. The cofactor is FAD. It depends on FMN as a cofactor.

It carries out the reaction hydrogen sulfide + 3 NADP(+) + 3 H2O = sulfite + 3 NADPH + 4 H(+). Its pathway is sulfur metabolism; hydrogen sulfide biosynthesis; hydrogen sulfide from sulfite (NADPH route): step 1/1. In terms of biological role, component of the sulfite reductase complex that catalyzes the 6-electron reduction of sulfite to sulfide. This is one of several activities required for the biosynthesis of L-cysteine from sulfate. The flavoprotein component catalyzes the electron flow from NADPH -&gt; FAD -&gt; FMN to the hemoprotein component. This chain is Sulfite reductase [NADPH] flavoprotein alpha-component, found in Enterobacter sp. (strain 638).